Here is a 264-residue protein sequence, read N- to C-terminus: Hydroxyethylthiazole kinase (264 aa).

Substrate is bound at residue M43. Residues K119 and S165 each contribute to the ATP site. G192 is a substrate binding site.

It belongs to the Thz kinase family. Mg(2+) is required as a cofactor.

The enzyme catalyses 5-(2-hydroxyethyl)-4-methylthiazole + ATP = 4-methyl-5-(2-phosphooxyethyl)-thiazole + ADP + H(+). It functions in the pathway cofactor biosynthesis; thiamine diphosphate biosynthesis; 4-methyl-5-(2-phosphoethyl)-thiazole from 5-(2-hydroxyethyl)-4-methylthiazole: step 1/1. Its function is as follows. Catalyzes the phosphorylation of the hydroxyl group of 4-methyl-5-beta-hydroxyethylthiazole (THZ). This chain is Hydroxyethylthiazole kinase, found in Methanocorpusculum labreanum (strain ATCC 43576 / DSM 4855 / Z).